The sequence spans 44 residues: Large ribosomal subunit protein bL34 (44 aa).

The tract at residues 1–26 is disordered; that stretch reads MQRTLGGTNRKRKRTSGFRARMRTPD. A compositionally biased stretch (basic residues) spans 9 to 22; sequence NRKRKRTSGFRARM.

Belongs to the bacterial ribosomal protein bL34 family.

This chain is Large ribosomal subunit protein bL34, found in Trichormus variabilis (strain ATCC 29413 / PCC 7937) (Anabaena variabilis).